A 202-amino-acid chain; its full sequence is Indolepyruvate oxidoreductase subunit IorB (202 aa).

In terms of assembly, heterodimer of the IorA and IorB subunits.

It catalyses the reaction indole-3-pyruvate + 2 oxidized [2Fe-2S]-[ferredoxin] + CoA = (indol-3-yl)acetyl-CoA + 2 reduced [2Fe-2S]-[ferredoxin] + CO2 + H(+). Its function is as follows. Catalyzes the ferredoxin-dependent oxidative decarboxylation of arylpyruvates. The protein is Indolepyruvate oxidoreductase subunit IorB (iorB) of Pyrococcus horikoshii (strain ATCC 700860 / DSM 12428 / JCM 9974 / NBRC 100139 / OT-3).